The chain runs to 418 residues: Serine hydroxymethyltransferase (418 aa).

(6S)-5,6,7,8-tetrahydrofolate is bound by residues L121 and 125–127; that span reads GHL. N6-(pyridoxal phosphate)lysine is present on K230. 355-357 serves as a coordination point for (6S)-5,6,7,8-tetrahydrofolate; the sequence is SPF.

Belongs to the SHMT family. As to quaternary structure, homodimer. The cofactor is pyridoxal 5'-phosphate.

The protein localises to the cytoplasm. The enzyme catalyses (6R)-5,10-methylene-5,6,7,8-tetrahydrofolate + glycine + H2O = (6S)-5,6,7,8-tetrahydrofolate + L-serine. It participates in one-carbon metabolism; tetrahydrofolate interconversion. It functions in the pathway amino-acid biosynthesis; glycine biosynthesis; glycine from L-serine: step 1/1. In terms of biological role, catalyzes the reversible interconversion of serine and glycine with tetrahydrofolate (THF) serving as the one-carbon carrier. This reaction serves as the major source of one-carbon groups required for the biosynthesis of purines, thymidylate, methionine, and other important biomolecules. Also exhibits THF-independent aldolase activity toward beta-hydroxyamino acids, producing glycine and aldehydes, via a retro-aldol mechanism. This is Serine hydroxymethyltransferase from Streptococcus pyogenes serotype M18 (strain MGAS8232).